The following is a 259-amino-acid chain: Pyrroloquinoline-quinone synthase (259 aa).

Belongs to the PqqC family.

It catalyses the reaction 6-(2-amino-2-carboxyethyl)-7,8-dioxo-1,2,3,4,7,8-hexahydroquinoline-2,4-dicarboxylate + 3 O2 = pyrroloquinoline quinone + 2 H2O2 + 2 H2O + H(+). It participates in cofactor biosynthesis; pyrroloquinoline quinone biosynthesis. In terms of biological role, ring cyclization and eight-electron oxidation of 3a-(2-amino-2-carboxyethyl)-4,5-dioxo-4,5,6,7,8,9-hexahydroquinoline-7,9-dicarboxylic-acid to PQQ. The polypeptide is Pyrroloquinoline-quinone synthase (Bradyrhizobium sp. (strain ORS 278)).